The primary structure comprises 550 residues: Zinc finger protein 382 (550 aa).

The mediates interaction with TRIM28 stretch occupies residues 1 to 105 (MPLQGSVSFK…RHSRPLIFIN (105 aa)). Represses transcription stretches follow at residues 5-46 (GSVS…FVSV) and 70-211 (IFPS…PEQP). A KRAB domain is found at 7–78 (VSFKDVTVDF…RIFPSYSYLE (72 aa)). A C2H2-type 1; degenerate zinc finger spans residues 212 to 234 (FDHNECEKSFLMKGMLFTHTRAH). 9 consecutive C2H2-type zinc fingers follow at residues 296–318 (FHCP…QRIH), 324–346 (YVCN…EKTH), 352–374 (FICI…HKTH), 380–402 (YECP…QRTH), 408–430 (YQCN…QRTH), 436–458 (YICN…QRIH), 464–486 (YICN…HRIH), 492–514 (NGCP…QKTH), and 520–542 (YECK…QKTH). Residues 296-550 (FHCPYCGNNF…THKVETTGIQ (255 aa)) form a required for transcriptional repression activity; probably mediates sequence-specific DNA-binding region.

Belongs to the krueppel C2H2-type zinc-finger protein family. In terms of assembly, interacts with TRIM28; enhances the transcriptional repressor activity. In terms of tissue distribution, specifically expressed in heart with a weaker expression also detected in skeletal muscle.

The protein resides in the nucleus. Functionally, functions as a sequence-specific transcriptional repressor. In Homo sapiens (Human), this protein is Zinc finger protein 382 (ZNF382).